The sequence spans 350 residues: Salicylate decarboxylase (350 aa).

It belongs to the metallo-dependent hydrolases superfamily. As to quaternary structure, homotetramer.

It catalyses the reaction salicylate + H(+) = phenol + CO2. Inhibited by AgNO(3), HgCl(2), p-chloromercuribenzoic acid and NiCl(2). In terms of biological role, reversibly catalyzes the regioselective carboxylation of phenol to form salicylic acid. Involved in a pathway for the degradation of salicylate via phenol. Also catalyzes the decarboxylation of beta-resorcylic acid (2,4-dihydroxybenzoic acid) into resorcinol (1,3-dihydroxybenzene), gamma-resorcylic acid (2,6-dihydroxybenzoic acid) into resorcinol, 2,3-dihydroxybenzoic acid into catechol (1,2-dihydroxybenzene), and 4-aminosalicylic acid into 3-aminophenol. This Cutaneotrichosporon moniliiforme (Yeast) protein is Salicylate decarboxylase.